The chain runs to 54 residues: Large ribosomal subunit protein bL33 (54 aa).

It belongs to the bacterial ribosomal protein bL33 family.

The chain is Large ribosomal subunit protein bL33 from Petrotoga mobilis (strain DSM 10674 / SJ95).